We begin with the raw amino-acid sequence, 355 residues long: Elongation factor Ts (355 aa).

An involved in Mg(2+) ion dislocation from EF-Tu region spans residues 82–85; it reads TDFV.

It belongs to the EF-Ts family.

The protein localises to the cytoplasm. Its function is as follows. Associates with the EF-Tu.GDP complex and induces the exchange of GDP to GTP. It remains bound to the aminoacyl-tRNA.EF-Tu.GTP complex up to the GTP hydrolysis stage on the ribosome. This is Elongation factor Ts from Helicobacter pylori (strain Shi470).